The following is a 138-amino-acid chain: ATP synthase epsilon chain (138 aa).

Belongs to the ATPase epsilon chain family. F-type ATPases have 2 components, CF(1) - the catalytic core - and CF(0) - the membrane proton channel. CF(1) has five subunits: alpha(3), beta(3), gamma(1), delta(1), epsilon(1). CF(0) has three main subunits: a, b and c.

It is found in the cell membrane. Its function is as follows. Produces ATP from ADP in the presence of a proton gradient across the membrane. The polypeptide is ATP synthase epsilon chain (Streptococcus uberis (strain ATCC BAA-854 / 0140J)).